The primary structure comprises 78 residues: Acyl carrier protein (78 aa).

In terms of domain architecture, Carrier spans 1-77 (MSEVEKKVID…DAIDYIEKNL (77 aa)). Ser-37 carries the O-(pantetheine 4'-phosphoryl)serine modification.

The protein belongs to the acyl carrier protein (ACP) family. 4'-phosphopantetheine is transferred from CoA to a specific serine of apo-ACP by AcpS. This modification is essential for activity because fatty acids are bound in thioester linkage to the sulfhydryl of the prosthetic group.

The protein localises to the cytoplasm. It participates in lipid metabolism; fatty acid biosynthesis. Its function is as follows. Carrier of the growing fatty acid chain in fatty acid biosynthesis. This Porphyromonas gingivalis (strain ATCC 33277 / DSM 20709 / CIP 103683 / JCM 12257 / NCTC 11834 / 2561) protein is Acyl carrier protein.